The sequence spans 457 residues: 5' exonuclease Apollo (457 aa).

The TBM signature appears at 425-437 (ELPKQYLLTPLNA).

It belongs to the DNA repair metallo-beta-lactamase (DRMBL) family. As to quaternary structure, interacts with TERF2; the interaction is direct.

Its subcellular location is the chromosome. It is found in the telomere. The protein localises to the nucleus. It catalyses the reaction a beta-lactam + H2O = a substituted beta-amino acid. 5'-3' exonuclease that plays a central role in telomere maintenance and protection during S-phase. Participates in the protection of telomeres against non-homologous end-joining (NHEJ)-mediated repair, thereby ensuring that telomeres do not fuse. Plays a key role in telomeric loop (T loop) formation by being recruited by TERF2 at the leading end telomeres and by processing leading-end telomeres immediately after their replication via its exonuclease activity: generates 3' single-stranded overhang at the leading end telomeres avoiding blunt leading-end telomeres that are vulnerable to end-joining reactions and expose the telomere end in a manner that activates the DNA repair pathways. May be required for DNA interstrand cross-link repair. Possesses beta-lactamase activity, catalyzing the hydrolysis of penicillin G and nitrocefin. Exhibits no activity towards other beta-lactam antibiotic classes including cephalosporins (cefotaxime) and carbapenems (imipenem). The chain is 5' exonuclease Apollo (DCLRE1B) from Gallus gallus (Chicken).